The sequence spans 230 residues: Large ribosomal subunit protein uL1 (230 aa).

Belongs to the universal ribosomal protein uL1 family. As to quaternary structure, part of the 50S ribosomal subunit.

Binds directly to 23S rRNA. The L1 stalk is quite mobile in the ribosome, and is involved in E site tRNA release. Functionally, protein L1 is also a translational repressor protein, it controls the translation of the L11 operon by binding to its mRNA. The protein is Large ribosomal subunit protein uL1 of Nitrosospira multiformis (strain ATCC 25196 / NCIMB 11849 / C 71).